The chain runs to 827 residues: Carnosine synthase 1 (827 aa).

Residues 516 to 720 (GPPWPAPSLH…LLLAAVMVAC (205 aa)) enclose the ATP-grasp domain. Position 542-611 (542-611 (VHQVPLPGVM…MEFVEGTEHD (70 aa))) interacts with ATP. Glutamate 677, glutamate 689, and asparagine 691 together coordinate Mg(2+). Residues glutamate 677, glutamate 689, and asparagine 691 each coordinate Mn(2+).

Homotetramer. The cofactor is Mg(2+). Mn(2+) is required as a cofactor.

The catalysed reaction is beta-alanine + L-histidine + ATP = carnosine + ADP + phosphate + H(+). The enzyme catalyses 4-aminobutanoate + L-histidine + ATP = L-homocarnosine + ADP + phosphate + H(+). Functionally, catalyzes the synthesis of carnosine and homocarnosine. Carnosine is synthesized more efficiently than homocarnosine. This is Carnosine synthase 1 from Homo sapiens (Human).